The chain runs to 209 residues: Neurotrophin-4 (209 aa).

A signal peptide spans 1 to 21 (MLPRHSCSLLLFLLLLPSVPM). The propeptide occupies 22–79 (EPQPPSSTLPPFLAPEWDLLSPRVALSRGTPAGPPLLFLLEAGAYGEPAGAPANRSRR). Residue asparagine 75 is glycosylated (N-linked (GlcNAc...) asparagine). Cystine bridges form between cysteine 96-cysteine 169, cysteine 140-cysteine 198, and cysteine 157-cysteine 200.

This sequence belongs to the NGF-beta family. Expressed in thymus, muscle, ovary, brain, heart, stomach and kidney. Expressed in both embryo and adult tissues.

The protein localises to the secreted. Functionally, target-derived survival factor for peripheral sensory sympathetic neurons. May promote ameloblast differentiation and subsequent reduction in proliferation of ameloblasts. The protein is Neurotrophin-4 (Ntf4) of Rattus norvegicus (Rat).